Here is a 314-residue protein sequence, read N- to C-terminus: MEFDLGEYFRAAFEDKLLVKMPDREDDFLTPATRLLEKRREMVEVEQALSTQKEEFQMKSESLQQRRAELELKEEKLKDSLFKFDKFLKENDSKRKRALHKAAEERQLAAHKEREALRLQAENTQLMQRKGTLLERQEKNSKYQQYLQRVLERTDEFQEVQEMIDRFNTLMATQNKLLKRDLENQELAEREKARLLHYQEETRSQILELNNQIAQLQGELERVRAVAFQWESRWAQIQNTAAENTLRLGRIRMSTLNLFQTISKQMRLKTEISVEDTEAQLEKIQICFEDLSAIYKDLKKAGTTPQTPAVPTTN.

Coiled-coil stretches lie at residues 34-133 (RLLE…KGTL) and 175-231 (NKLL…FQWE).

This sequence belongs to the CFAP73 family.

The chain is Coiled-coil domain-containing protein 42 like-2 from Xenopus tropicalis (Western clawed frog).